Consider the following 193-residue polypeptide: Recombination protein RecR (193 aa).

The C4-type zinc-finger motif lies at 61 to 76 (CSSCNALSESEVCEIC). Residues 84–170 (SQLCMVLHPR…TFTKIAQGVP (87 aa)) enclose the Toprim domain.

It belongs to the RecR family.

May play a role in DNA repair. It seems to be involved in an RecBC-independent recombinational process of DNA repair. It may act with RecF and RecO. The sequence is that of Recombination protein RecR from Helicobacter pylori (strain G27).